A 248-amino-acid chain; its full sequence is 2,3-bisphosphoglycerate-dependent phosphoglycerate mutase (248 aa).

Substrate contacts are provided by residues 8–15 (RHGESQWN), 21–22 (TG), arginine 60, 87–90 (ERHY), lysine 98, 114–115 (RR), and 183–184 (GN). Histidine 9 functions as the Tele-phosphohistidine intermediate in the catalytic mechanism. The Proton donor/acceptor role is filled by glutamate 87.

It belongs to the phosphoglycerate mutase family. BPG-dependent PGAM subfamily. Homodimer.

It catalyses the reaction (2R)-2-phosphoglycerate = (2R)-3-phosphoglycerate. Its pathway is carbohydrate degradation; glycolysis; pyruvate from D-glyceraldehyde 3-phosphate: step 3/5. In terms of biological role, catalyzes the interconversion of 2-phosphoglycerate and 3-phosphoglycerate. This Teredinibacter turnerae (strain ATCC 39867 / T7901) protein is 2,3-bisphosphoglycerate-dependent phosphoglycerate mutase.